The chain runs to 445 residues: Retrovirus-related Pol polyprotein from type-1 retrotransposable element R2 (445 aa).

The 114-residue stretch at 1–114 folds into the Reverse transcriptase domain; that stretch reads QPSVFNLVKW…LSRDDSLAKA (114 aa). The interval 115–445 is nucleic acid-binding endonuclease; the sequence is MLASAGPAAE…GATPRQLIEY (331 aa). Residues 380–389 show a composition bias toward basic residues; the sequence is GPRPAHHHQP. Residues 380–445 are disordered; sequence GPRPAHHHQP…GATPRQLIEY (66 aa). Over residues 396-405 the composition is skewed to polar residues; it reads ATANTGTLQS.

It carries out the reaction DNA(n) + a 2'-deoxyribonucleoside 5'-triphosphate = DNA(n+1) + diphosphate. In Popillia japonica (Japanese beetle), this protein is Retrovirus-related Pol polyprotein from type-1 retrotransposable element R2.